The chain runs to 601 residues: Oligoendopeptidase F, plasmid (601 aa).

H387 is a binding site for Zn(2+). E388 is an active-site residue. Zn(2+) is bound by residues H391 and H394.

Belongs to the peptidase M3B family. Zn(2+) serves as cofactor.

Its function is as follows. Hydrolyzes peptides containing between 7 and 17 amino acids with a rather wide specificity. In Lactococcus lactis subsp. cremoris (Streptococcus cremoris), this protein is Oligoendopeptidase F, plasmid (pepF1).